The following is a 101-amino-acid chain: Eukaryotic translation initiation factor 4E-binding protein 3 (101 aa).

The interval 1-28 (MSSSTSCPIPGCRDQLPDGYSTTPGGTL) is disordered. Residues 40–46 (YDRKFLL) carry the YXXXXLphi motif motif. The TOS motif signature appears at 97–101 (FEMDM).

Belongs to the eIF4E-binding protein family. In terms of assembly, interacts with EIF4E. Interacts with RPA2 (via N-terminus); the interaction enhances EIF4EBP3-mediated inhibition of EIF4E-mediated mRNA nuclear export. Phosphorylated.

It is found in the cytoplasm. The protein resides in the nucleus. Repressor of translation initiation that regulates EIF4E activity by preventing its assembly into the eIF4F complex: the hypophosphorylated form competes with EIF4G1/EIF4G3 and strongly binds to EIF4E, leading to repression of translation. In contrast, the hyperphosphorylated form dissociates from EIF4E, allowing interaction between EIF4G1/EIF4G3 and EIF4E, leading to initiation of translation. Inhibits EIF4E-mediated mRNA nuclear export. This chain is Eukaryotic translation initiation factor 4E-binding protein 3 (Eif4ebp3), found in Mus musculus (Mouse).